We begin with the raw amino-acid sequence, 114 residues long: UPF0342 protein SERP1381 (114 aa).

The protein belongs to the UPF0342 family.

The sequence is that of UPF0342 protein SERP1381 from Staphylococcus epidermidis (strain ATCC 35984 / DSM 28319 / BCRC 17069 / CCUG 31568 / BM 3577 / RP62A).